The sequence spans 360 residues: Protein RecA (360 aa).

G77 to T84 provides a ligand contact to ATP.

Belongs to the RecA family.

Its subcellular location is the cytoplasm. In terms of biological role, can catalyze the hydrolysis of ATP in the presence of single-stranded DNA, the ATP-dependent uptake of single-stranded DNA by duplex DNA, and the ATP-dependent hybridization of homologous single-stranded DNAs. It interacts with LexA causing its activation and leading to its autocatalytic cleavage. The chain is Protein RecA from Chelativorans sp. (strain BNC1).